A 483-amino-acid polypeptide reads, in one-letter code: Rhamnulokinase (483 aa).

ATP is bound at residue Ala11–Arg15. Substrate-binding positions include Gly79 and His234–Thr236. Asp235 acts as the Proton acceptor in catalysis. Thr257 serves as a coordination point for ATP. Asn294 lines the substrate pocket. Gln302 provides a ligand contact to ATP. A disulfide bond links Cys352 and Cys369. Gly401 provides a ligand contact to ATP.

It belongs to the rhamnulokinase family. The cofactor is Mg(2+).

It carries out the reaction L-rhamnulose + ATP = L-rhamnulose 1-phosphate + ADP + H(+). The protein operates within carbohydrate degradation; L-rhamnose degradation; glycerone phosphate from L-rhamnose: step 2/3. In terms of biological role, involved in the catabolism of L-rhamnose (6-deoxy-L-mannose). Catalyzes the transfer of the gamma-phosphate group from ATP to the 1-hydroxyl group of L-rhamnulose to yield L-rhamnulose 1-phosphate. This is Rhamnulokinase from Listeria monocytogenes serotype 4b (strain CLIP80459).